The sequence spans 192 residues: MKNLFLIIGAPGSGKTTDAGCIAQMNQSVAHYSTGDLLRAEVAKDSELGKKIDKIISGGNLVPLEIVINTITSAIHACEKDFIIIDGYPRSVEQMTELDKVLANEYDINLSAVIEVNVSEEVAKERVLGRARGADDNEEVFYNRMKVFVEPIEEIRKFYNEKGIFHSINGERTIEEIVTDINAIIVKKIVQG.

G12 to T17 provides a ligand contact to ATP. The interval S33–V62 is NMP. Residues T34, R39, N60–V62, G87–R90, and Q94 contribute to the AMP site. The segment at G129–D135 is LID. R130 provides a ligand contact to ATP. Positions 132 and 144 each coordinate AMP. R172 lines the ATP pocket.

Belongs to the adenylate kinase family. In terms of assembly, monomer.

The protein localises to the cytoplasm. The enzyme catalyses AMP + ATP = 2 ADP. The protein operates within purine metabolism; AMP biosynthesis via salvage pathway; AMP from ADP: step 1/1. Catalyzes the reversible transfer of the terminal phosphate group between ATP and AMP. Plays an important role in cellular energy homeostasis and in adenine nucleotide metabolism. This Campylobacter hominis (strain ATCC BAA-381 / DSM 21671 / CCUG 45161 / LMG 19568 / NCTC 13146 / CH001A) protein is Adenylate kinase.